The chain runs to 127 residues: Aspartate 1-decarboxylase (127 aa).

Serine 25 serves as the catalytic Schiff-base intermediate with substrate; via pyruvic acid. Pyruvic acid (Ser) is present on serine 25. Residue threonine 57 participates in substrate binding. The active-site Proton donor is the tyrosine 58. Glycine 73–alanine 75 provides a ligand contact to substrate.

Belongs to the PanD family. In terms of assembly, heterooctamer of four alpha and four beta subunits. Pyruvate serves as cofactor. Post-translationally, is synthesized initially as an inactive proenzyme, which is activated by self-cleavage at a specific serine bond to produce a beta-subunit with a hydroxyl group at its C-terminus and an alpha-subunit with a pyruvoyl group at its N-terminus.

The protein resides in the cytoplasm. It carries out the reaction L-aspartate + H(+) = beta-alanine + CO2. It functions in the pathway cofactor biosynthesis; (R)-pantothenate biosynthesis; beta-alanine from L-aspartate: step 1/1. Catalyzes the pyruvoyl-dependent decarboxylation of aspartate to produce beta-alanine. The chain is Aspartate 1-decarboxylase from Staphylococcus aureus (strain JH1).